Reading from the N-terminus, the 139-residue chain is Small ribosomal subunit protein uS12 (139 aa).

The segment at methionine 1–alanine 21 is disordered. Aspartate 102 carries the 3-methylthioaspartic acid modification.

This sequence belongs to the universal ribosomal protein uS12 family. As to quaternary structure, part of the 30S ribosomal subunit. Contacts proteins S8 and S17. May interact with IF1 in the 30S initiation complex.

Functionally, with S4 and S5 plays an important role in translational accuracy. Its function is as follows. Interacts with and stabilizes bases of the 16S rRNA that are involved in tRNA selection in the A site and with the mRNA backbone. Located at the interface of the 30S and 50S subunits, it traverses the body of the 30S subunit contacting proteins on the other side and probably holding the rRNA structure together. The combined cluster of proteins S8, S12 and S17 appears to hold together the shoulder and platform of the 30S subunit. This is Small ribosomal subunit protein uS12 from Alkaliphilus metalliredigens (strain QYMF).